Here is a 358-residue protein sequence, read N- to C-terminus: Alpha-2-HS-glycoprotein (358 aa).

The first 18 residues, methionine 1–serine 18, serve as a signal peptide directing secretion. One can recognise a Cystatin fetuin-A-type 1 domain in the interval glutamate 27–glutamate 133. 6 disulfides stabilise this stretch: cysteine 32–cysteine 349, cysteine 89–cysteine 100, cysteine 114–cysteine 132, cysteine 146–cysteine 149, cysteine 208–cysteine 218, and cysteine 229–cysteine 246. An N-linked (GlcNAc...) asparagine glycan is attached at asparagine 99. Serine 134 carries the post-translational modification Phosphoserine. Threonine 135 is subject to Phosphothreonine. Residue serine 138 is modified to Phosphoserine. A Cystatin fetuin-A-type 2 domain is found at lysine 144–valine 254. 2 N-linked (GlcNAc...) asparagine glycosylation sites follow: asparagine 156 and asparagine 176. The segment at leucine 257–serine 288 is disordered. The span at asparagine 267–proline 282 shows a compositional bias: pro residues. Residues serine 318 and serine 320 each carry the phosphoserine modification. Residues serine 320 to proline 350 form a disordered region.

Belongs to the fetuin family. Phosphorylated by FAM20C in the extracellular medium. As to expression, bone marrow.

The protein resides in the secreted. The protein is Alpha-2-HS-glycoprotein (AHSG) of Cavia porcellus (Guinea pig).